The primary structure comprises 394 residues: Probable purine permease 23 (394 aa).

Over residues 1 to 20 (MEMTEASKHTTTHEESEHVQ) the composition is skewed to basic and acidic residues. The segment at 1–24 (MEMTEASKHTTTHEESEHVQNPEP) is disordered. At Ser-29 the chain carries Phosphoserine. The next 10 helical transmembrane spans lie at 43 to 63 (ISVLICLFLVLLGDSLVILLL), 85 to 105 (WMQALIQNAAFPILIPLFFIF), 124 to 144 (LILLYFSLGVLVAAHSKLYAL), 152 to 172 (GFFMLISGSQLIFTLIFTAII), 180 to 200 (WIIISIVLILVSYAFGGPVFS), 211 to 231 (GIQAWLTFAASVAFALSLCLV), 254 to 274 (VLEMQICVSSVASVVCLVGLF), 301 to 321 (VGLALSWQVWAVGLIGLVLYV), 328 to 348 (IVHMCASPLMAFIVVLAFDFI), and 352 to 372 (FSWPRIGALIGSVLALGSYFY).

The protein belongs to the purine permeases (TC 2.A.7.14) family.

Its subcellular location is the membrane. The sequence is that of Probable purine permease 23 (PUP23) from Arabidopsis thaliana (Mouse-ear cress).